Here is a 762-residue protein sequence, read N- to C-terminus: Phosphoribosylformylglycinamidine synthase subunit PurL (762 aa).

His58 is an active-site residue. ATP contacts are provided by Tyr61 and Lys105. Glu107 contributes to the Mg(2+) binding site. Substrate-binding positions include 108 to 111 and Arg130; that span reads SHNH. His109 acts as the Proton acceptor in catalysis. Residue Asp131 coordinates Mg(2+). Substrate is bound at residue Gln260. A Mg(2+)-binding site is contributed by Asp288. 332 to 334 contacts substrate; the sequence is ESQ. ATP contacts are provided by Asn520 and Gly557. Asn558 provides a ligand contact to Mg(2+). A substrate-binding site is contributed by Ser560.

It belongs to the FGAMS family. Monomer. Part of the FGAM synthase complex composed of 1 PurL, 1 PurQ and 2 PurS subunits.

The protein localises to the cytoplasm. It carries out the reaction N(2)-formyl-N(1)-(5-phospho-beta-D-ribosyl)glycinamide + L-glutamine + ATP + H2O = 2-formamido-N(1)-(5-O-phospho-beta-D-ribosyl)acetamidine + L-glutamate + ADP + phosphate + H(+). Its pathway is purine metabolism; IMP biosynthesis via de novo pathway; 5-amino-1-(5-phospho-D-ribosyl)imidazole from N(2)-formyl-N(1)-(5-phospho-D-ribosyl)glycinamide: step 1/2. Its function is as follows. Part of the phosphoribosylformylglycinamidine synthase complex involved in the purines biosynthetic pathway. Catalyzes the ATP-dependent conversion of formylglycinamide ribonucleotide (FGAR) and glutamine to yield formylglycinamidine ribonucleotide (FGAM) and glutamate. The FGAM synthase complex is composed of three subunits. PurQ produces an ammonia molecule by converting glutamine to glutamate. PurL transfers the ammonia molecule to FGAR to form FGAM in an ATP-dependent manner. PurS interacts with PurQ and PurL and is thought to assist in the transfer of the ammonia molecule from PurQ to PurL. The polypeptide is Phosphoribosylformylglycinamidine synthase subunit PurL (Rhodococcus erythropolis (strain PR4 / NBRC 100887)).